The primary structure comprises 388 residues: Angiopoietin-related protein 5 (388 aa).

A signal peptide spans 1-25 (MMSPSQASLLFLNVCIFICGEAVQG). The N-linked (GlcNAc...) asparagine glycan is linked to Asn53. A coiled-coil region spans residues 98 to 123 (LRNMMDEQQASLDYLSNQVNELMNRV). The Fibrinogen C-terminal domain occupies 141–383 (RPVQSHGLDC…SVSMKIRRMY (243 aa)). Asn238 carries N-linked (GlcNAc...) asparagine glycosylation. 2 disulfides stabilise this stretch: Cys310–Cys314 and Cys324–Cys338. A glycan (N-linked (GlcNAc...) asparagine) is linked at Asn329.

Mainly expressed in adult heart.

The protein resides in the secreted. The protein is Angiopoietin-related protein 5 (ANGPTL5) of Homo sapiens (Human).